We begin with the raw amino-acid sequence, 179 residues long: Large ribosomal subunit protein uL5 (179 aa).

This sequence belongs to the universal ribosomal protein uL5 family. As to quaternary structure, part of the 50S ribosomal subunit; part of the 5S rRNA/L5/L18/L25 subcomplex. Contacts the 5S rRNA and the P site tRNA. Forms a bridge to the 30S subunit in the 70S ribosome.

This is one of the proteins that bind and probably mediate the attachment of the 5S RNA into the large ribosomal subunit, where it forms part of the central protuberance. In the 70S ribosome it contacts protein S13 of the 30S subunit (bridge B1b), connecting the 2 subunits; this bridge is implicated in subunit movement. Contacts the P site tRNA; the 5S rRNA and some of its associated proteins might help stabilize positioning of ribosome-bound tRNAs. The protein is Large ribosomal subunit protein uL5 of Histophilus somni (strain 129Pt) (Haemophilus somnus).